The following is a 151-amino-acid chain: Small ribosomal subunit protein uS15 (151 aa).

The span at 1-16 (MPHRSRHKKGRSRSVR) shows a compositional bias: basic residues. The tract at residues 1-21 (MPHRSRHKKGRSRSVRPAHPT) is disordered.

The protein belongs to the universal ribosomal protein uS15 family. Part of the 30S ribosomal subunit.

This Pyrobaculum islandicum (strain DSM 4184 / JCM 9189 / GEO3) protein is Small ribosomal subunit protein uS15.